The chain runs to 419 residues: UDP-N-acetylglucosamine 1-carboxyvinyltransferase 2 (419 aa).

22–23 (KN) is a binding site for phosphoenolpyruvate. Arg92 contributes to the UDP-N-acetyl-alpha-D-glucosamine binding site. The active-site Proton donor is Asp116. Residues 121–125 (RPIDQ), Asp306, and Leu328 each bind UDP-N-acetyl-alpha-D-glucosamine.

It belongs to the EPSP synthase family. MurA subfamily.

Its subcellular location is the cytoplasm. It catalyses the reaction phosphoenolpyruvate + UDP-N-acetyl-alpha-D-glucosamine = UDP-N-acetyl-3-O-(1-carboxyvinyl)-alpha-D-glucosamine + phosphate. It functions in the pathway cell wall biogenesis; peptidoglycan biosynthesis. Its function is as follows. Cell wall formation. Adds enolpyruvyl to UDP-N-acetylglucosamine. The chain is UDP-N-acetylglucosamine 1-carboxyvinyltransferase 2 from Latilactobacillus sakei subsp. sakei (strain 23K) (Lactobacillus sakei subsp. sakei).